The following is a 162-amino-acid chain: Endoribonuclease YbeY (162 aa).

The Zn(2+) site is built by histidine 118, histidine 122, and histidine 128.

This sequence belongs to the endoribonuclease YbeY family. The cofactor is Zn(2+).

The protein resides in the cytoplasm. In terms of biological role, single strand-specific metallo-endoribonuclease involved in late-stage 70S ribosome quality control and in maturation of the 3' terminus of the 16S rRNA. The polypeptide is Endoribonuclease YbeY (Caulobacter sp. (strain K31)).